The primary structure comprises 426 residues: tRNA(Met) cytidine acetate ligase (426 aa).

ATP contacts are provided by residues 7 to 20, glycine 101, asparagine 168, and arginine 193; that span reads VVEYNPFHNGHLFH.

This sequence belongs to the TmcAL family.

The protein resides in the cytoplasm. The catalysed reaction is cytidine(34) in elongator tRNA(Met) + acetate + ATP = N(4)-acetylcytidine(34) in elongator tRNA(Met) + AMP + diphosphate. Its function is as follows. Catalyzes the formation of N(4)-acetylcytidine (ac(4)C) at the wobble position of elongator tRNA(Met), using acetate and ATP as substrates. First activates an acetate ion to form acetyladenylate (Ac-AMP) and then transfers the acetyl group to tRNA to form ac(4)C34. The protein is tRNA(Met) cytidine acetate ligase of Kosmotoga olearia (strain ATCC BAA-1733 / DSM 21960 / TBF 19.5.1).